The following is a 354-amino-acid chain: Dihydroorotate dehydrogenase (quinone) (354 aa).

Residues 67 to 71 (AGFDK) and threonine 91 each bind FMN. Lysine 71 contributes to the substrate binding site. 116-120 (NRMGF) contributes to the substrate binding site. The FMN site is built by asparagine 144 and asparagine 177. Substrate is bound at residue asparagine 177. The active-site Nucleophile is serine 180. Asparagine 182 contacts substrate. Positions 213 and 241 each coordinate FMN. Residue 242–243 (NT) participates in substrate binding. Residues glycine 265, glycine 294, and 315–316 (YT) each bind FMN.

Belongs to the dihydroorotate dehydrogenase family. Type 2 subfamily. Monomer. The cofactor is FMN.

Its subcellular location is the cell membrane. The enzyme catalyses (S)-dihydroorotate + a quinone = orotate + a quinol. It functions in the pathway pyrimidine metabolism; UMP biosynthesis via de novo pathway; orotate from (S)-dihydroorotate (quinone route): step 1/1. Functionally, catalyzes the conversion of dihydroorotate to orotate with quinone as electron acceptor. This is Dihydroorotate dehydrogenase (quinone) from Mycolicibacterium smegmatis (strain ATCC 700084 / mc(2)155) (Mycobacterium smegmatis).